Here is a 494-residue protein sequence, read N- to C-terminus: Glutamyl-tRNA(Gln) amidotransferase subunit A (494 aa).

Residues Lys80 and Ser155 each act as charge relay system in the active site. The Acyl-ester intermediate role is filled by Ser179.

Belongs to the amidase family. GatA subfamily. As to quaternary structure, heterotrimer of A, B and C subunits.

It catalyses the reaction L-glutamyl-tRNA(Gln) + L-glutamine + ATP + H2O = L-glutaminyl-tRNA(Gln) + L-glutamate + ADP + phosphate + H(+). Functionally, allows the formation of correctly charged Gln-tRNA(Gln) through the transamidation of misacylated Glu-tRNA(Gln) in organisms which lack glutaminyl-tRNA synthetase. The reaction takes place in the presence of glutamine and ATP through an activated gamma-phospho-Glu-tRNA(Gln). In Lachnoclostridium phytofermentans (strain ATCC 700394 / DSM 18823 / ISDg) (Clostridium phytofermentans), this protein is Glutamyl-tRNA(Gln) amidotransferase subunit A.